A 101-amino-acid chain; its full sequence is NAD(P)H-quinone oxidoreductase subunit 4L, chloroplastic (101 aa).

A run of 3 helical transmembrane segments spans residues 2–22 (ILEHVLVLSAYLFLIGLYGLI), 32–52 (MCLELILNAVNMNFVTFSDFF), and 61–81 (IFCIFVIAIAAAEAAIGLAIV).

This sequence belongs to the complex I subunit 4L family. NDH is composed of at least 16 different subunits, 5 of which are encoded in the nucleus.

It localises to the plastid. It is found in the chloroplast thylakoid membrane. The enzyme catalyses a plastoquinone + NADH + (n+1) H(+)(in) = a plastoquinol + NAD(+) + n H(+)(out). It catalyses the reaction a plastoquinone + NADPH + (n+1) H(+)(in) = a plastoquinol + NADP(+) + n H(+)(out). NDH shuttles electrons from NAD(P)H:plastoquinone, via FMN and iron-sulfur (Fe-S) centers, to quinones in the photosynthetic chain and possibly in a chloroplast respiratory chain. The immediate electron acceptor for the enzyme in this species is believed to be plastoquinone. Couples the redox reaction to proton translocation, and thus conserves the redox energy in a proton gradient. This Crucihimalaya wallichii (Rock-cress) protein is NAD(P)H-quinone oxidoreductase subunit 4L, chloroplastic.